The sequence spans 204 residues: Ribosomal RNA small subunit methyltransferase J (204 aa).

Residues 55–56 (RD), 71–72 (ER), and aspartate 123 each bind S-adenosyl-L-methionine.

Belongs to the methyltransferase superfamily. RsmJ family.

The protein resides in the cytoplasm. The catalysed reaction is guanosine(1516) in 16S rRNA + S-adenosyl-L-methionine = N(2)-methylguanosine(1516) in 16S rRNA + S-adenosyl-L-homocysteine + H(+). Functionally, specifically methylates the guanosine in position 1516 of 16S rRNA. This is Ribosomal RNA small subunit methyltransferase J from Rhodopseudomonas palustris (strain ATCC BAA-98 / CGA009).